The sequence spans 560 residues: MMEPPQTRLMINVFIVSFLALLVNLVVGVLGADNYSRDDFPLDFVFGSGTSAYQVEGAANKDGRTPSIWDTFAYAGYAHGENGDVACDGYHKYKEDVQLMLETGLDAYRFSISWSRLLPNGRGPVNPKGLQYSNNLINELISNGIQPHATLYNFDLPQVLEDEYGGWISRDIIRDFTYYAEVEFREFGDRVLYWTTVNEPNVFALGGYDQGNSPPRRCSPPFCATNDTMGNSTYEPYLAVHHILLSHSSAARLYWRKYRDKQHGFVGISIYTFGIFPQTNTEKDRVASQRARDFFVGWIMEPLQYGDYPISMKTNAGERIPAFTNHESKQVKGSFDFIGVIHYTNLNVSDNSDALKNQLRDFTADMAANIFGEDLFSNEEYLITPWGLRQELNKFKLLYGNPPIFIHENGQRTASNSSLQDVDKGEILHGYIGSVLDALRDASNIKGYFRMAFPGFVRVARWIQVSFGLYYVDRDDPQLKKIPKLFCKNGTTGFLKGRRTSILDLFELEQDPITCSKSPIIFSKISKWVLASLLFLIQHKIKFMWREPLPGQIPLKLVMF.

The first 31 residues, 1 to 31 (MMEPPQTRLMINVFIVSFLALLVNLVVGVLG), serve as a signal peptide directing secretion. Residues 32 to 517 (ADNYSRDDFP…LEQDPITCSK (486 aa)) lie on the Peroxisomal side of the membrane. An N-linked (GlcNAc...) asparagine glycan is attached at Asn34. A beta-D-glucoside-binding positions include Gln54 and 198 to 199 (NE). Catalysis depends on Glu199, which acts as the Proton donor. An intrachain disulfide couples Cys218 to Cys223. Asn226 and Asn231 each carry an N-linked (GlcNAc...) asparagine glycan. A beta-D-glucoside is bound at residue Tyr343. Residue Asn347 is glycosylated (N-linked (GlcNAc...) asparagine). Residue Glu408 coordinates a beta-D-glucoside. The Nucleophile role is filled by Glu408. A glycan (N-linked (GlcNAc...) asparagine) is linked at Asn416. Phe467 contacts a beta-D-glucoside. A glycan (N-linked (GlcNAc...) asparagine) is linked at Asn489. A helical transmembrane segment spans residues 518-538 (SPIIFSKISKWVLASLLFLIQ). Residues 539 to 560 (HKIKFMWREPLPGQIPLKLVMF) lie on the Cytoplasmic side of the membrane.

This sequence belongs to the glycosyl hydrolase 1 family. Monomer. In terms of tissue distribution, highly expressed in uninfected root nodules. Detected in leaves, stems and roots.

The protein resides in the peroxisome membrane. It catalyses the reaction 5-hydroxyisourate + H2O = 5-hydroxy-2-oxo-4-ureido-2,5-dihydro-1H-imidazole-5-carboxylate + H(+). It participates in purine metabolism; urate degradation; (S)-allantoin from urate: step 2/3. In terms of biological role, involved in the conversion of hydroxyisourate to ureides such as allantoin, the major form of nitrogen transport in legumes. The polypeptide is Hydroxyisourate hydrolase (HIUH) (Glycine max (Soybean)).